A 350-amino-acid chain; its full sequence is Holliday junction branch migration complex subunit RuvB (350 aa).

The segment at 1–186 is large ATPase domain (RuvB-L); sequence MAGHEEEDER…FGIPLRLDFY (186 aa). Residues Leu-25, Arg-26, Gly-67, Lys-70, Thr-71, Thr-72, 133–135, Arg-176, Tyr-186, and Arg-223 contribute to the ATP site; that span reads EDF. Thr-71 serves as a coordination point for Mg(2+). The segment at 187 to 257 is small ATPAse domain (RuvB-S); the sequence is ETDELVQIVT…IADAALNRLE (71 aa). The head domain (RuvB-H) stretch occupies residues 260 to 350; the sequence is GRGLDAMDRR…VQPDLWSDAP (91 aa). DNA contacts are provided by Arg-296, Arg-315, and Arg-320.

This sequence belongs to the RuvB family. In terms of assembly, homohexamer. Forms an RuvA(8)-RuvB(12)-Holliday junction (HJ) complex. HJ DNA is sandwiched between 2 RuvA tetramers; dsDNA enters through RuvA and exits via RuvB. An RuvB hexamer assembles on each DNA strand where it exits the tetramer. Each RuvB hexamer is contacted by two RuvA subunits (via domain III) on 2 adjacent RuvB subunits; this complex drives branch migration. In the full resolvosome a probable DNA-RuvA(4)-RuvB(12)-RuvC(2) complex forms which resolves the HJ.

It localises to the cytoplasm. The enzyme catalyses ATP + H2O = ADP + phosphate + H(+). The RuvA-RuvB-RuvC complex processes Holliday junction (HJ) DNA during genetic recombination and DNA repair, while the RuvA-RuvB complex plays an important role in the rescue of blocked DNA replication forks via replication fork reversal (RFR). RuvA specifically binds to HJ cruciform DNA, conferring on it an open structure. The RuvB hexamer acts as an ATP-dependent pump, pulling dsDNA into and through the RuvAB complex. RuvB forms 2 homohexamers on either side of HJ DNA bound by 1 or 2 RuvA tetramers; 4 subunits per hexamer contact DNA at a time. Coordinated motions by a converter formed by DNA-disengaged RuvB subunits stimulates ATP hydrolysis and nucleotide exchange. Immobilization of the converter enables RuvB to convert the ATP-contained energy into a lever motion, pulling 2 nucleotides of DNA out of the RuvA tetramer per ATP hydrolyzed, thus driving DNA branch migration. The RuvB motors rotate together with the DNA substrate, which together with the progressing nucleotide cycle form the mechanistic basis for DNA recombination by continuous HJ branch migration. Branch migration allows RuvC to scan DNA until it finds its consensus sequence, where it cleaves and resolves cruciform DNA. This chain is Holliday junction branch migration complex subunit RuvB, found in Rhodospirillum rubrum (strain ATCC 11170 / ATH 1.1.1 / DSM 467 / LMG 4362 / NCIMB 8255 / S1).